The following is a 917-amino-acid chain: Isoleucine--tRNA ligase (917 aa).

Residues 59-69 (PYANGHIHIGH) carry the 'HIGH' region motif. E569 is an L-isoleucyl-5'-AMP binding site. The 'KMSKS' region signature appears at 610 to 614 (KMSKS). Residue K613 participates in ATP binding. 4 residues coordinate Zn(2+): C890, C893, C905, and C908.

It belongs to the class-I aminoacyl-tRNA synthetase family. IleS type 1 subfamily. In terms of assembly, monomer. Zn(2+) serves as cofactor.

The protein localises to the cytoplasm. It catalyses the reaction tRNA(Ile) + L-isoleucine + ATP = L-isoleucyl-tRNA(Ile) + AMP + diphosphate. Functionally, catalyzes the attachment of isoleucine to tRNA(Ile). As IleRS can inadvertently accommodate and process structurally similar amino acids such as valine, to avoid such errors it has two additional distinct tRNA(Ile)-dependent editing activities. One activity is designated as 'pretransfer' editing and involves the hydrolysis of activated Val-AMP. The other activity is designated 'posttransfer' editing and involves deacylation of mischarged Val-tRNA(Ile). This chain is Isoleucine--tRNA ligase, found in Campylobacter jejuni subsp. jejuni serotype O:2 (strain ATCC 700819 / NCTC 11168).